A 46-amino-acid chain; its full sequence is Hellethionin-D (46 aa).

Intrachain disulfides connect Cys3–Cys40, Cys4–Cys32, Cys12–Cys30, and Cys16–Cys26.

Belongs to the plant thionin (TC 1.C.44) family. 4 C-C subfamily.

It is found in the secreted. In terms of biological role, thionins are small plant proteins which are toxic to animal cells. They seem to exert their toxic effect at the level of the cell membrane. Their precise function is not known. This is Hellethionin-D from Helleborus purpurascens (Purple hellebore).